The following is a 435-amino-acid chain: Adenylosuccinate synthetase (435 aa).

GTP contacts are provided by residues 11 to 17 and 39 to 41; these read GDEGKGK and GHT. The Proton acceptor role is filled by Asp12. The Mg(2+) site is built by Asp12 and Gly39. IMP is bound by residues 12–15, 37–40, Thr128, Arg142, Gln223, Thr238, and Arg302; these read DEGK and NAGH. His40 acts as the Proton donor in catalysis. 298–304 is a binding site for substrate; it reads SVTGRPR. GTP-binding positions include Arg304, 330–332, and 412–414; these read KLD and STG.

It belongs to the adenylosuccinate synthetase family. Homodimer. It depends on Mg(2+) as a cofactor.

It localises to the cytoplasm. The catalysed reaction is IMP + L-aspartate + GTP = N(6)-(1,2-dicarboxyethyl)-AMP + GDP + phosphate + 2 H(+). Its pathway is purine metabolism; AMP biosynthesis via de novo pathway; AMP from IMP: step 1/2. Functionally, plays an important role in the de novo pathway of purine nucleotide biosynthesis. Catalyzes the first committed step in the biosynthesis of AMP from IMP. This is Adenylosuccinate synthetase from Coxiella burnetii (strain RSA 493 / Nine Mile phase I).